A 555-amino-acid chain; its full sequence is Protein NRT1/ PTR FAMILY 2.1 (555 aa).

Transmembrane regions (helical) follow at residues 32–52 (TLLGISVTSYGWVLNLIVFLI), 68–88 (IVNGCLSMLPVVTAILADSFF), 91–111 (IPVISASAFISLLGIFLLTLI), 127–147 (ILCQSPSKLHLGVLYAALALV), 175–195 (FFNWYFLTVNTGAIISATAIV), 205–225 (LGFGLCAAANLISFIVFISGK), 324–344 (VLPLWLAILFVGTSIGVQASM), 369–389 (VIVLISSCVFLVLNNWTIYPI), 401–421 (LQQVGIGQVFNILSMAISAIV), 437–457 (VLWLLPPLVIVGIGDAFHYMA), 476–496 (SVTSVAFGISFYLSTALINLI), and 517–537 (WVLVIGGVLNLGYFFVCSWYF).

This sequence belongs to the major facilitator superfamily. Proton-dependent oligopeptide transporter (POT/PTR) (TC 2.A.17) family. As to expression, expressed in roots.

It localises to the membrane. Functionally, transporter involved in a passive nitrate efflux. The sequence is that of Protein NRT1/ PTR FAMILY 2.1 (NPF2.1) from Arabidopsis thaliana (Mouse-ear cress).